Reading from the N-terminus, the 326-residue chain is Adenosine receptor A1 (326 aa).

Topologically, residues 1–10 are extracellular; it reads MPHSVSAFQA. A helical transmembrane segment spans residues 11–33; sequence AYIGIEVLIALVSVPGNVLVIWA. Over 34-46 the chain is Cytoplasmic; that stretch reads VKVNQALRDATFC. A helical transmembrane segment spans residues 47–69; the sequence is FIASLAVADVAVGALVIPLAILI. Over 70–80 the chain is Extracellular; sequence NIGPQTYFHTC. A disulfide bond links C80 and C169. Residues 81 to 102 form a helical membrane-spanning segment; that stretch reads LMVACPVLILTQSSILALLAIA. The Cytoplasmic segment spans residues 103-123; it reads VDRYLRVKIPLRYKTVVTPRR. A helical membrane pass occupies residues 124–146; the sequence is AAVAIAGCWILSLVVGLTPMFGW. Residues 147–176 are Extracellular-facing; sequence NNLSKIEMAWAANGSVGEPVIKCEFEKVIS. N159 carries an N-linked (GlcNAc...) asparagine glycan. Residues 177–201 form a helical membrane-spanning segment; that stretch reads MEYMVYFNFFVWVLPPLLLMVLIYL. The Cytoplasmic segment spans residues 202-235; the sequence is EVFYLIRKQLSKKVSASSGDPQKYYGKELKIAKS. A helical membrane pass occupies residues 236–259; the sequence is LALILFLFALSWLPLHILNCITLF. Over 260–267 the chain is Extracellular; it reads CPTCHKPT. A helical membrane pass occupies residues 268 to 292; the sequence is ILTYIAIFLTHGNSAMNPIVYAFRI. Residues 293 to 326 lie on the Cytoplasmic side of the membrane; that stretch reads QKFRVTFLKIWNDHFRCQPEPPIDEDLPEEKVDD. C309 is lipidated: S-palmitoyl cysteine.

This sequence belongs to the G-protein coupled receptor 1 family.

The protein localises to the cell membrane. In terms of biological role, receptor for adenosine. The activity of this receptor is mediated by G proteins which inhibit adenylyl cyclase. The polypeptide is Adenosine receptor A1 (ADORA1) (Cavia porcellus (Guinea pig)).